A 331-amino-acid polypeptide reads, in one-letter code: Probable transaldolase (331 aa).

Lys142 serves as the catalytic Schiff-base intermediate with substrate.

The protein belongs to the transaldolase family. Type 1 subfamily. As to quaternary structure, homodimer.

The protein localises to the cytoplasm. It carries out the reaction D-sedoheptulose 7-phosphate + D-glyceraldehyde 3-phosphate = D-erythrose 4-phosphate + beta-D-fructose 6-phosphate. Its pathway is carbohydrate degradation; pentose phosphate pathway; D-glyceraldehyde 3-phosphate and beta-D-fructose 6-phosphate from D-ribose 5-phosphate and D-xylulose 5-phosphate (non-oxidative stage): step 2/3. In terms of biological role, transaldolase is important for the balance of metabolites in the pentose-phosphate pathway. This chain is Probable transaldolase, found in Drosophila melanogaster (Fruit fly).